Reading from the N-terminus, the 554-residue chain is Chaperonin GroEL (554 aa).

Residues 30 to 33 (TLGP), Lys51, 87 to 91 (DGTTT), Gly415, 479 to 481 (NAA), and Asp495 contribute to the ATP site.

It belongs to the chaperonin (HSP60) family. In terms of assembly, forms a cylinder of 14 subunits composed of two heptameric rings stacked back-to-back. Interacts with the co-chaperonin GroES.

It localises to the cytoplasm. It catalyses the reaction ATP + H2O + a folded polypeptide = ADP + phosphate + an unfolded polypeptide.. In terms of biological role, together with its co-chaperonin GroES, plays an essential role in assisting protein folding. The GroEL-GroES system forms a nano-cage that allows encapsulation of the non-native substrate proteins and provides a physical environment optimized to promote and accelerate protein folding. This chain is Chaperonin GroEL, found in Nitrosococcus oceani (strain ATCC 19707 / BCRC 17464 / JCM 30415 / NCIMB 11848 / C-107).